The chain runs to 470 residues: Putative multidrug resistance protein MdtD (470 aa).

Topologically, residues 1–11 (MTEFPDNTRWQ) are periplasmic. Residues 12 to 32 (LWIVAFGFFMQSLDTTIVNTA) traverse the membrane as a helical segment. Topologically, residues 33-48 (LPSMAKSLGESPLHMH) are cytoplasmic. Residues 49 to 69 (MVVVSYVLTVAVMLPASGWLA) traverse the membrane as a helical segment. At 70–76 (DKIGVRN) the chain is on the periplasmic side. A helical transmembrane segment spans residues 77–97 (IFFAAIVLFTLGSLFCALSGT). The Cytoplasmic segment spans residues 98–101 (LNQL). Residues 102–124 (VLARVLQGVGGAMMVPVGRLTVM) traverse the membrane as a helical segment. Topologically, residues 125 to 137 (KIVPRAQYMAAMT) are periplasmic. Residues 138 to 158 (FVALPGQIGPLLGPALGGVLV) form a helical membrane-spanning segment. Over 159 to 164 (EYASWH) the chain is Cytoplasmic. A helical transmembrane segment spans residues 165–185 (WIFLINIPVGIVGAMATFMLM). Over 186 to 196 (PNYTIETRRFD) the chain is Periplasmic. The chain crosses the membrane as a helical span at residues 197-217 (LPGFLLLAIGMAVLTLALDGS). Residues 218–224 (KSMGISP) lie on the Cytoplasmic side of the membrane. The helical transmembrane segment at 225 to 245 (WTLAGLAAGGAAAILLYLFHA) threads the bilayer. Topologically, residues 246–262 (KKNSGALFSLRLFRTPT) are periplasmic. The chain crosses the membrane as a helical span at residues 263–283 (FSLGLLGSFAGRIGSGMLPFM). Residues 284-285 (TP) are Cytoplasmic-facing. The chain crosses the membrane as a helical span at residues 286–306 (VFLQIGLGFSPFHAGLMMIPM). The Periplasmic portion of the chain corresponds to 307–341 (VLGSMGMKRIVVQIVNRFGYRRVLVATTLGLALVS). The chain crosses the membrane as a helical span at residues 342 to 362 (LLFMSVALLGWYYLLPLVLLL). Over 363–395 (QGMVNSARFSSMNTLTLKDLPDTLASSGNSLLS) the chain is Cytoplasmic. Residues 396 to 416 (MIMQLSMSIGVTIAGMLLGMF) form a helical membrane-spanning segment. Topologically, residues 417 to 430 (GQQHIGIDSSATHH) are periplasmic. Residues 431–451 (VFMYTWLCMAVIIALPAIIFA) traverse the membrane as a helical segment. Residues 452–470 (RVPNDTQQNMVISRRKRSL) are Cytoplasmic-facing.

It belongs to the major facilitator superfamily. TCR/Tet family.

The protein resides in the cell inner membrane. This chain is Putative multidrug resistance protein MdtD, found in Salmonella typhi.